A 424-amino-acid chain; its full sequence is UPF0229 protein PC1_1960 (424 aa).

The interval 46–109 (IESGESVSIP…GQGDASKDGE (64 aa)) is disordered. The segment covering 77–90 (PGNDHFVQNDKIER) has biased composition (basic and acidic residues). Residues 92–101 (QGGGGGGSGQ) are compositionally biased toward gly residues.

Belongs to the UPF0229 family.

The sequence is that of UPF0229 protein PC1_1960 from Pectobacterium carotovorum subsp. carotovorum (strain PC1).